Consider the following 684-residue polypeptide: Suppressor of presenilin protein 3 (684 aa).

5 consecutive C2H2-type zinc fingers follow at residues 21–43 (YKCH…LRRH), 48–71 (FDCE…LQSH), 123–145 (YKCP…ILSH), 261–283 (YLCR…FRHH), and 291–313 (WTCI…VKMH). Disordered stretches follow at residues 337 to 359 (DLNK…HSDM), 419 to 440 (KNNS…SKSD), and 469 to 501 (TSKF…DQFQ). C2H2-type zinc fingers lie at residues 590–612 (RECT…RDKH) and 618–641 (HTCP…FVDH). A disordered region spans residues 652–684 (LPSSDSEDDNIPVPPDTPQRKKKAPKRGKRRGW). The segment covering 671–684 (RKKKAPKRGKRRGW) has biased composition (basic residues).

The protein resides in the nucleus. In terms of biological role, probable transcriptional regulator, which participates in the transcriptional repression of the presenilin protein hop-1. The polypeptide is Suppressor of presenilin protein 3 (spr-3) (Caenorhabditis elegans).